Consider the following 736-residue polypeptide: Catalase-peroxidase (736 aa).

The disordered stretch occupies residues 1 to 30; the sequence is MGGNVMTDDKMNSVTSGANKQETGRDMSNR. The span at 12 to 21 shows a compositional bias: polar residues; the sequence is NSVTSGANKQ. The tryptophyl-tyrosyl-methioninium (Trp-Tyr) (with M-250) cross-link spans 101 to 224; that stretch reads WHSAGTYRAG…LAAVQMGLIY (124 aa). Histidine 102 (proton acceptor) is an active-site residue. Positions 224–250 form a cross-link, tryptophyl-tyrosyl-methioninium (Tyr-Met) (with W-101); it reads YVNPEGPNGNPDPIAAAKDIREVFARM. A heme b-binding site is contributed by histidine 265. Positions 351-373 are disordered; that stretch reads KGGAGAGTIPDAHDPSKRHAPSM.

Belongs to the peroxidase family. Peroxidase/catalase subfamily. As to quaternary structure, homodimer or homotetramer. Requires heme b as cofactor. In terms of processing, formation of the three residue Trp-Tyr-Met cross-link is important for the catalase, but not the peroxidase activity of the enzyme.

The enzyme catalyses H2O2 + AH2 = A + 2 H2O. The catalysed reaction is 2 H2O2 = O2 + 2 H2O. Bifunctional enzyme with both catalase and broad-spectrum peroxidase activity. This chain is Catalase-peroxidase, found in Methanosarcina acetivorans (strain ATCC 35395 / DSM 2834 / JCM 12185 / C2A).